The primary structure comprises 473 residues: Photosystem II CP43 reaction center protein (473 aa).

A propeptide spanning residues Met-1–Glu-14 is cleaved from the precursor. Residue Thr-15 is modified to N-acetylthreonine. Residue Thr-15 is modified to Phosphothreonine. 5 helical membrane passes run Leu-69–Ala-93, Leu-134–Asn-155, Lys-178–Thr-200, Lys-255–Ser-275, and Trp-291–Ala-312. [CaMn4O5] cluster is bound at residue Glu-367. A helical transmembrane segment spans residues Arg-447–Pro-471.

The protein belongs to the PsbB/PsbC family. PsbC subfamily. In terms of assembly, PSII is composed of 1 copy each of membrane proteins PsbA, PsbB, PsbC, PsbD, PsbE, PsbF, PsbH, PsbI, PsbJ, PsbK, PsbL, PsbM, PsbT, PsbX, PsbY, PsbZ, Psb30/Ycf12, at least 3 peripheral proteins of the oxygen-evolving complex and a large number of cofactors. It forms dimeric complexes. Binds multiple chlorophylls and provides some of the ligands for the Ca-4Mn-5O cluster of the oxygen-evolving complex. It may also provide a ligand for a Cl- that is required for oxygen evolution. PSII binds additional chlorophylls, carotenoids and specific lipids. serves as cofactor.

Its subcellular location is the plastid. It is found in the chloroplast thylakoid membrane. One of the components of the core complex of photosystem II (PSII). It binds chlorophyll and helps catalyze the primary light-induced photochemical processes of PSII. PSII is a light-driven water:plastoquinone oxidoreductase, using light energy to abstract electrons from H(2)O, generating O(2) and a proton gradient subsequently used for ATP formation. The chain is Photosystem II CP43 reaction center protein from Nephroselmis olivacea (Green alga).